The chain runs to 120 residues: Large ribosomal subunit protein uL18 (120 aa).

Over residues 1–20 the composition is skewed to basic residues; sequence MKSTRKSATQRRHRRLRRHL. Residues 1 to 26 form a disordered region; sequence MKSTRKSATQRRHRRLRRHLSGTSER.

It belongs to the universal ribosomal protein uL18 family. As to quaternary structure, part of the 50S ribosomal subunit; part of the 5S rRNA/L5/L18/L25 subcomplex. Contacts the 5S and 23S rRNAs.

Functionally, this is one of the proteins that bind and probably mediate the attachment of the 5S RNA into the large ribosomal subunit, where it forms part of the central protuberance. The protein is Large ribosomal subunit protein uL18 of Synechocystis sp. (strain ATCC 27184 / PCC 6803 / Kazusa).